Here is a 651-residue protein sequence, read N- to C-terminus: A-type voltage-gated potassium channel KCND1 (651 aa).

The Cytoplasmic portion of the chain corresponds to 1–183 (MAAGVATWLP…RAFENPHTST (183 aa)). The interaction with KCNIP1, KCNIP2, and other family members stretch occupies residues 2–20 (AAGVATWLPFARAAAVGWL). 3 residues coordinate Zn(2+): H104, C131, and C132. The interval 144 to 164 (AERLAEDEEAEQAGEGPALPA) is disordered. A helical membrane pass occupies residues 184–205 (AALVFYYVTGFFIAVSVIANVV). The Extracellular portion of the chain corresponds to 206 to 230 (ETIPCRGTPRWPSKEQSCGDRFPTA). Residues 231 to 252 (FFCMDTACVLIFTGEYLLRLFA) traverse the membrane as a helical segment. Topologically, residues 253-263 (APSRCRFLRSV) are cytoplasmic. The helical transmembrane segment at 264–284 (MSLIDVVAILPYYIGLFVPKN) threads the bilayer. Residues 285–287 (DDV) lie on the Extracellular side of the membrane. The chain crosses the membrane as a helical; Voltage-sensor span at residues 288 to 308 (SGAFVTLRVFRVFRIFKFSRH). Over 309-323 (SQGLRILGYTLKSCA) the chain is Cytoplasmic. The segment at 310–323 (QGLRILGYTLKSCA) is S4-S5 linker. The helical transmembrane segment at 324–345 (SELGFLLFSLTMAIIIFATVMF) threads the bilayer. Topologically, residues 346 to 359 (YAEKGTSKTNFTSI) are extracellular. A glycan (N-linked (GlcNAc...) asparagine) is linked at N355. The helical intramembrane region spans 360–371 (PAAFWYTIVTMT). Positions 372–377 (TLGYGD) match the Selectivity filter motif. Residues 372–379 (TLGYGDMV) lie within the membrane without spanning it. The Extracellular segment spans residues 380-386 (PSTIAGK). A helical membrane pass occupies residues 387-415 (IFGSICSLSGVLVIALPVPVIVSNFSRIY). Residues 416 to 651 (HQNQRADKRR…LPETVKISSL (236 aa)) are Cytoplasmic-facing. Residue S458 is modified to Phosphoserine. The tract at residues 474–489 (FEQQHHHLLHCLEKTT) is required for dendritic targeting. Phosphoserine is present on S555. 2 disordered regions span residues 566–585 (RRSPAPQTRSSLNAKPHDSL) and 601–651 (IPTP…ISSL). Positions 626–637 (TPNTTLRNSSLG) are enriched in polar residues.

Belongs to the potassium channel family. D (Shal) (TC 1.A.1.2) subfamily. Kv4.1/KCND1 sub-subfamily. As to quaternary structure, component of heteromultimeric potassium channels. Identified in potassium channel complexes containing KCND1, KCND2, KCND3, KCNIP1, KCNIP2, KCNIP3, KCNIP4, DPP6 and DPP10.

It localises to the cell membrane. The catalysed reaction is K(+)(in) = K(+)(out). Functionally, A-type voltage-gated potassium channel that mediates transmembrane potassium transport in excitable membranes in the brain. Mediates A-type current I(SA) in suprachiasmatic nucleus (SCN) neurons. Exhibits a low-threshold A-type current with a hyperpolarized steady-state inactivation midpoint and the recovery process was steeply voltage-dependent, with recovery being markedly faster at more negative potentials. May regulates repetitive firing rates in the suprachiasmatic nucleus (SCN) neurons and circadian rhythms in neuronal excitability and behavior. Contributes to the regulation of the circadian rhythm of action potential firing in suprachiasmatic nucleus neurons, which regulates the circadian rhythm of locomotor activity. The regulatory subunit KCNIP1 modulates the kinetics of channel inactivation, increases the current amplitudes and accelerates recovery from inactivation, shifts activation in a depolarizing direction. The regulatory subunit DPP10 decreases the voltage sensitivity of the inactivation channel gating. This is A-type voltage-gated potassium channel KCND1 from Mus musculus (Mouse).